The primary structure comprises 113 residues: Nitrogenase-stabilizing/protective protein NifW (113 aa).

Belongs to the NifW family. As to quaternary structure, homotrimer; associates with NifD.

May protect the nitrogenase Fe-Mo protein from oxidative damage. The sequence is that of Nitrogenase-stabilizing/protective protein NifW from Dechloromonas aromatica (strain RCB).